A 344-amino-acid chain; its full sequence is tRNA N6-adenosine threonylcarbamoyltransferase (344 aa).

Residues His111 and His115 each contribute to the Fe cation site. Substrate contacts are provided by residues 134–138 (LVSGG), Asp167, Gly180, and Asn274. A Fe cation-binding site is contributed by Asp302.

The protein belongs to the KAE1 / TsaD family. Requires Fe(2+) as cofactor.

It is found in the cytoplasm. The enzyme catalyses L-threonylcarbamoyladenylate + adenosine(37) in tRNA = N(6)-L-threonylcarbamoyladenosine(37) in tRNA + AMP + H(+). In terms of biological role, required for the formation of a threonylcarbamoyl group on adenosine at position 37 (t(6)A37) in tRNAs that read codons beginning with adenine. Is involved in the transfer of the threonylcarbamoyl moiety of threonylcarbamoyl-AMP (TC-AMP) to the N6 group of A37, together with TsaE and TsaB. TsaD likely plays a direct catalytic role in this reaction. This chain is tRNA N6-adenosine threonylcarbamoyltransferase, found in Dechloromonas aromatica (strain RCB).